Reading from the N-terminus, the 538-residue chain is Chaperonin GroEL (538 aa).

ATP is bound by residues 29 to 32 (TLGP), 86 to 90 (DGTTT), G413, 477 to 479 (NAA), and D493.

This sequence belongs to the chaperonin (HSP60) family. As to quaternary structure, forms a cylinder of 14 subunits composed of two heptameric rings stacked back-to-back. Interacts with the co-chaperonin GroES.

Its subcellular location is the cytoplasm. The catalysed reaction is ATP + H2O + a folded polypeptide = ADP + phosphate + an unfolded polypeptide.. Functionally, together with its co-chaperonin GroES, plays an essential role in assisting protein folding. The GroEL-GroES system forms a nano-cage that allows encapsulation of the non-native substrate proteins and provides a physical environment optimized to promote and accelerate protein folding. The polypeptide is Chaperonin GroEL (Scardovia inopinata (Bifidobacterium inopinatum)).